Here is a 443-residue protein sequence, read N- to C-terminus: Trigger factor (443 aa).

The 86-residue stretch at 165-250 (GDQIVMDFLG…VKEVKKPVPA (86 aa)) folds into the PPIase FKBP-type domain.

This sequence belongs to the FKBP-type PPIase family. Tig subfamily.

It localises to the cytoplasm. It catalyses the reaction [protein]-peptidylproline (omega=180) = [protein]-peptidylproline (omega=0). Functionally, involved in protein export. Acts as a chaperone by maintaining the newly synthesized protein in an open conformation. Functions as a peptidyl-prolyl cis-trans isomerase. The sequence is that of Trigger factor from Roseobacter denitrificans (strain ATCC 33942 / OCh 114) (Erythrobacter sp. (strain OCh 114)).